Here is a 414-residue protein sequence, read N- to C-terminus: Enterobactin exporter EntS (414 aa).

Topologically, residues Met1–Ala21 are cytoplasmic. The helical transmembrane segment at Val22–Val42 threads the bilayer. Residues Gln43–Gly55 are Periplasmic-facing. A helical membrane pass occupies residues Leu56–Ala76. The Cytoplasmic portion of the chain corresponds to Asp77–Lys83. The chain crosses the membrane as a helical span at residues Val84–Leu104. Residues Leu105–Ser109 are Periplasmic-facing. The helical transmembrane segment at Leu110–Ala130 threads the bilayer. The Cytoplasmic segment spans residues Leu131 to Arg156. Residues Leu157–Trp177 traverse the membrane as a helical segment. Residue Asn178 is a topological domain, periplasmic. The chain crosses the membrane as a helical span at residues Tyr179–Leu199. Residues Pro200–Arg218 are Cytoplasmic-facing. The helical transmembrane segment at Phe219–Ala239 threads the bilayer. The Periplasmic segment spans residues Ser240–Ser256. A helical membrane pass occupies residues Ala257–Thr277. The Cytoplasmic segment spans residues Ser278–Pro287. Residues Gly288–Ile307 form a helical membrane-spanning segment. At Met308–Ala313 the chain is on the periplasmic side. Residues Gly314–Leu336 form a helical membrane-spanning segment. Residues Gln337 to Asn356 are Cytoplasmic-facing. The helical transmembrane segment at Val357–Val377 threads the bilayer. Position 378 (Ala378) is a topological domain, periplasmic. A helical membrane pass occupies residues Ser379–Gly399. Residues Glu400 to Gly414 lie on the Cytoplasmic side of the membrane.

It belongs to the major facilitator superfamily. EntS (TC 2.A.1.38) family.

It localises to the cell inner membrane. In terms of biological role, component of an export pathway for enterobactin. The sequence is that of Enterobactin exporter EntS from Salmonella typhi.